The following is a 346-amino-acid chain: MARDLIGPALPPGFKEHATVEDEERDPSPVAGPALPPNYRSCSSDSSDSDEDSSSLSEEGNQESEEEDTGPNAKKQRRNQDDDDDDDGFFGPALPPGFKKQDDSPPRPIIGPALPPGFIKSPQKNDKGREDPGQVSSFFNSEEAESGEDEDIVGPMPAKGPVNYSVTTEFEKRAQRMKEKLTKGDDDSSKPITRESWMTELPPEMKEFGLGPRTFKRRADDKSGDRSVWTDTPADRERKAKEIQEARKSFSKKDEENILSGRDKRLAEQVSSYNESKRSESLMDIHHKKLKSKAAEDKNKHQERIPFDRDKDLKVNRFDEAQKKALIKKSRELNTRFSHGKGNMFL.

2 disordered regions span residues 1-283 (MARD…ESLM) and 289-308 (KLKSKAAEDKNKHQERIPFD). At Ala-2 the chain carries N-acetylalanine. Residues 7-12 (GPALPP) carry the GPALPP motif 1 motif. Phosphoserine is present on Ser-28. The GPALPP motif 2 signature appears at 32 to 37 (GPALPP). The span at 60–69 (GNQESEEEDT) shows a compositional bias: acidic residues. Residues 91 to 96 (GPALPP) carry the GPALPP motif 3 motif. Ser-104 carries the post-translational modification Phosphoserine. Positions 106–115 (PRPIIGPALP) are enriched in pro residues. The GPALPP motif 4 signature appears at 111-116 (GPALPP). Basic and acidic residues predominate over residues 123 to 132 (QKNDKGREDP). Residues Ser-136, Ser-141, and Ser-146 each carry the phosphoserine modification. Residues 142-152 (EEAESGEDEDI) are compositionally biased toward acidic residues. Basic and acidic residues-rich tracts occupy residues 169–193 (EFEKRAQRMKEKLTKGDDDSSKPIT) and 233–267 (PADRERKAKEIQEARKSFSKKDEENILSGRDKRLA). Residue Lys-277 forms a Glycyl lysine isopeptide (Lys-Gly) (interchain with G-Cter in SUMO2) linkage. Basic and acidic residues predominate over residues 293–308 (KAAEDKNKHQERIPFD). A Glycyl lysine isopeptide (Lys-Gly) (interchain with G-Cter in SUMO2) cross-link involves residue Lys-314.

In Mus musculus (Mouse), this protein is GPALPP motifs-containing protein 1 (Gpalpp1).